We begin with the raw amino-acid sequence, 778 residues long: Endonuclease MutS2 (778 aa).

328-335 (GPNTGGKT) is a binding site for ATP. The Smr domain maps to 702-777 (LDLRGKRYEE…GSGATIVTFK (76 aa)).

It belongs to the DNA mismatch repair MutS family. MutS2 subfamily. As to quaternary structure, homodimer. Binds to stalled ribosomes, contacting rRNA.

Endonuclease that is involved in the suppression of homologous recombination and thus may have a key role in the control of bacterial genetic diversity. In terms of biological role, acts as a ribosome collision sensor, splitting the ribosome into its 2 subunits. Detects stalled/collided 70S ribosomes which it binds and splits by an ATP-hydrolysis driven conformational change. Acts upstream of the ribosome quality control system (RQC), a ribosome-associated complex that mediates the extraction of incompletely synthesized nascent chains from stalled ribosomes and their subsequent degradation. Probably generates substrates for RQC. This is Endonuclease MutS2 from Streptococcus pneumoniae serotype 2 (strain D39 / NCTC 7466).